The primary structure comprises 207 residues: Large ribosomal subunit protein uL4 (207 aa).

It belongs to the universal ribosomal protein uL4 family. As to quaternary structure, part of the 50S ribosomal subunit.

One of the primary rRNA binding proteins, this protein initially binds near the 5'-end of the 23S rRNA. It is important during the early stages of 50S assembly. It makes multiple contacts with different domains of the 23S rRNA in the assembled 50S subunit and ribosome. Its function is as follows. Forms part of the polypeptide exit tunnel. The chain is Large ribosomal subunit protein uL4 from Rickettsia africae (strain ESF-5).